Consider the following 20-residue polypeptide: Pregnancy-associated glycoprotein 60H (20 aa).

An N-linked (GlcNAc...) asparagine glycan is attached at Asn4.

This sequence belongs to the peptidase A1 family. In terms of tissue distribution, chorionic epithelium (trophectoderm) and placental cotyledons.

The protein resides in the secreted. It localises to the extracellular space. This is Pregnancy-associated glycoprotein 60H from Bison bonasus (European bison).